The following is a 468-amino-acid chain: Cell division protein FtsA (468 aa).

The segment at 416-468 is disordered; it reads NKKDTHENEVESSDEEIYQSEDNHQEHKQNHEHVQDKDKEESKFKKLMKSLFE. Positions 425 to 434 are enriched in acidic residues; that stretch reads VESSDEEIYQ. Over residues 436 to 459 the composition is skewed to basic and acidic residues; the sequence is EDNHQEHKQNHEHVQDKDKEESKF.

The protein belongs to the FtsA/MreB family. As to quaternary structure, self-interacts. Interacts with FtsZ.

Its subcellular location is the cell membrane. Functionally, cell division protein that is involved in the assembly of the Z ring. May serve as a membrane anchor for the Z ring. The polypeptide is Cell division protein FtsA (Staphylococcus aureus (strain MRSA252)).